Here is a 345-residue protein sequence, read N- to C-terminus: Myb/SANT-like DNA-binding domain-containing protein 4 (345 aa).

Residues 4–77 (LKRKRKSNFS…EVKRRYLDWR (74 aa)) enclose the Myb-like domain. Lys-9 is covalently cross-linked (Glycyl lysine isopeptide (Lys-Gly) (interchain with G-Cter in SUMO2)). Position 106 is a phosphoserine (Ser-106). Glycyl lysine isopeptide (Lys-Gly) (interchain with G-Cter in SUMO2) cross-links involve residues Lys-114 and Lys-142. The tract at residues 141 to 160 (VKVEEEERDPQSPEFEIEEE) is disordered. Position 188 is a phosphothreonine (Thr-188). A coiled-coil region spans residues 203-345 (LLVNIEKQKL…LRIQKEGHLQ (143 aa)). Glycyl lysine isopeptide (Lys-Gly) (interchain with G-Cter in SUMO2) cross-links involve residues Lys-237, Lys-254, and Lys-273.

This is Myb/SANT-like DNA-binding domain-containing protein 4 (MSANTD4) from Bos taurus (Bovine).